Here is a 382-residue protein sequence, read N- to C-terminus: ATP phosphoribosyltransferase regulatory subunit (382 aa).

It belongs to the class-II aminoacyl-tRNA synthetase family. HisZ subfamily. In terms of assembly, heteromultimer composed of HisG and HisZ subunits.

The protein localises to the cytoplasm. The protein operates within amino-acid biosynthesis; L-histidine biosynthesis; L-histidine from 5-phospho-alpha-D-ribose 1-diphosphate: step 1/9. Required for the first step of histidine biosynthesis. May allow the feedback regulation of ATP phosphoribosyltransferase activity by histidine. This is ATP phosphoribosyltransferase regulatory subunit from Burkholderia pseudomallei (strain 1106a).